The primary structure comprises 284 residues: Homeobox protein SIX1 (284 aa).

A DNA-binding region (homeobox) is located at residues 124-183 (GEETSYCFKEKSRGVLREWYAHNPYPSPREKRELAEATGLTTTQVSNWFKNRRQRDRAAE). Residues 168-271 (VSNWFKNRRQ…AHQHQLQDSL (104 aa)) are disordered. A compositionally biased stretch (basic and acidic residues) spans 179–190 (DRAAEAKERENT). The span at 242 to 271 (RSSNYSLPGLTASQPSHGLQAHQHQLQDSL) shows a compositional bias: polar residues.

It belongs to the SIX/Sine oculis homeobox family. Interacts with DACH1. Interacts with EYA1. Interacts with EYA2. Interacts with CDH1. Interacts with TBX18. Interacts with CEBPA. Interacts with CEBPB. Interacts with EBF2. In terms of processing, phosphorylated during interphase; becomes hyperphosphorylated during mitosis. Hyperphosphorylation impairs binding to promoter elements. Ubiquitinated by the anaphase promoting complex (APC), leading to its proteasomal degradation.

It localises to the nucleus. It is found in the cytoplasm. Its function is as follows. Transcription factor that is involved in the regulation of cell proliferation, apoptosis and embryonic development. Plays an important role in the development of several organs, including kidney, muscle and inner ear. Depending on context, functions as a transcriptional repressor or activator. Lacks an activation domain, and requires interaction with EYA family members for transcription activation. Mediates nuclear translocation of EYA1 and EYA2. Binds the 5'-TCA[AG][AG]TTNC-3' motif present in the MEF3 element in the MYOG promoter and CIDEA enhancer. Regulates the expression of numerous genes, including MYC, CCNA1, CCND1 and EZR. Acts as an activator of the IGFBP5 promoter, probably coactivated by EYA2. Repression of precursor cell proliferation in myoblasts is switched to activation through recruitment of EYA3 to the SIX1-DACH1 complex. During myogenesis, seems to act together with EYA2 and DACH2. Regulates the expression of CCNA1. Promotes brown adipocyte differentiation. In Lagothrix lagotricha (Brown woolly monkey), this protein is Homeobox protein SIX1 (SIX1).